We begin with the raw amino-acid sequence, 220 residues long: uncharacterized protein (220 aa).

The tract at residues 194–220 (DQSQQQATKSNSKTKKLKGNHGEKTKI) is disordered. The span at 195–204 (QSQQQATKSN) shows a compositional bias: polar residues.

This is an uncharacterized protein from Borreliella burgdorferi (strain ATCC 35210 / DSM 4680 / CIP 102532 / B31) (Borrelia burgdorferi).